A 478-amino-acid chain; its full sequence is Protein nucleotidyltransferase YdiU (478 aa).

ATP-binding residues include G84, G86, R87, K107, D119, G120, R170, and R177. Residue D246 is the Proton acceptor of the active site. 2 residues coordinate Mg(2+): N247 and D256. D256 provides a ligand contact to ATP.

It belongs to the SELO family. The cofactor is Mg(2+). Mn(2+) is required as a cofactor.

It catalyses the reaction L-seryl-[protein] + ATP = 3-O-(5'-adenylyl)-L-seryl-[protein] + diphosphate. The catalysed reaction is L-threonyl-[protein] + ATP = 3-O-(5'-adenylyl)-L-threonyl-[protein] + diphosphate. It carries out the reaction L-tyrosyl-[protein] + ATP = O-(5'-adenylyl)-L-tyrosyl-[protein] + diphosphate. The enzyme catalyses L-histidyl-[protein] + UTP = N(tele)-(5'-uridylyl)-L-histidyl-[protein] + diphosphate. It catalyses the reaction L-seryl-[protein] + UTP = O-(5'-uridylyl)-L-seryl-[protein] + diphosphate. The catalysed reaction is L-tyrosyl-[protein] + UTP = O-(5'-uridylyl)-L-tyrosyl-[protein] + diphosphate. In terms of biological role, nucleotidyltransferase involved in the post-translational modification of proteins. It can catalyze the addition of adenosine monophosphate (AMP) or uridine monophosphate (UMP) to a protein, resulting in modifications known as AMPylation and UMPylation. The protein is Protein nucleotidyltransferase YdiU of Escherichia coli O81 (strain ED1a).